An 88-amino-acid polypeptide reads, in one-letter code: Small ribosomal subunit protein bS20 (88 aa).

A disordered region spans residues 1-33; that stretch reads MANTSSAKKATRKIARRTAVNKSRRTQMRGSVR.

The protein belongs to the bacterial ribosomal protein bS20 family.

Functionally, binds directly to 16S ribosomal RNA. This Rhodopseudomonas palustris (strain BisB5) protein is Small ribosomal subunit protein bS20.